The sequence spans 60 residues: Myrmicitoxin(1)-Pr4c (60 aa).

Positions 1-23 (MKAIIFLFAVLTVVAIIIPIISG) are cleaved as a signal peptide. The propeptide occupies 24-33 (EPNAGPHAAS). Gln59 bears the Glutamine amide mark.

Belongs to the formicidae venom clade 2 family. Expressed by the venom gland.

It is found in the secreted. Its function is as follows. Toxin that causes a rapid and irreversible paralysis when intrathoracically injected into insects (blowflies). Does not cause spontaneous nocifensive behaviors by intraplantar injection in mice. This is Myrmicitoxin(1)-Pr4c from Pogonomyrmex rugosus (Desert harvester ant).